The following is a 365-amino-acid chain: Protein-glutamate methylesterase/protein-glutamine glutaminase (365 aa).

One can recognise a Response regulatory domain in the interval 5–122 (KVLIVDDSAF…SLDIRKIGEK (118 aa)). At Asp56 the chain carries 4-aspartylphosphate. A compositionally biased stretch (basic and acidic residues) spans 146 to 155 (IKKEKQDESS). The tract at residues 146 to 167 (IKKEKQDESSTPKPQVEKTSGL) is disordered. The segment covering 156-167 (TPKPQVEKTSGL) has biased composition (polar residues). The 187-residue stretch at 177-363 (ILIGSSTGGP…LEIIKFAKKI (187 aa)) folds into the CheB-type methylesterase domain. Residues Ser182, His208, and Asp305 contribute to the active site.

This sequence belongs to the CheB family. In terms of processing, phosphorylated by CheA. Phosphorylation of the N-terminal regulatory domain activates the methylesterase activity.

It localises to the cytoplasm. It catalyses the reaction [protein]-L-glutamate 5-O-methyl ester + H2O = L-glutamyl-[protein] + methanol + H(+). The catalysed reaction is L-glutaminyl-[protein] + H2O = L-glutamyl-[protein] + NH4(+). Involved in chemotaxis. Part of a chemotaxis signal transduction system that modulates chemotaxis in response to various stimuli. Catalyzes the demethylation of specific methylglutamate residues introduced into the chemoreceptors (methyl-accepting chemotaxis proteins or MCP) by CheR. Also mediates the irreversible deamidation of specific glutamine residues to glutamic acid. The chain is Protein-glutamate methylesterase/protein-glutamine glutaminase from Methanococcus maripaludis (strain DSM 14266 / JCM 13030 / NBRC 101832 / S2 / LL).